Here is a 373-residue protein sequence, read N- to C-terminus: Dual-specificity RNA methyltransferase RlmN (373 aa).

Catalysis depends on E94, which acts as the Proton acceptor. A Radical SAM core domain is found at 100–339 (DGDRATLCVS…VTVRKTRGDD (240 aa)). C107 and C344 are oxidised to a cystine. Positions 114, 118, and 121 each coordinate [4Fe-4S] cluster. S-adenosyl-L-methionine contacts are provided by residues 168-169 (GE), S200, 222-224 (SLH), and N301. C344 acts as the S-methylcysteine intermediate in catalysis.

The protein belongs to the radical SAM superfamily. RlmN family. It depends on [4Fe-4S] cluster as a cofactor.

The protein resides in the cytoplasm. It carries out the reaction adenosine(2503) in 23S rRNA + 2 reduced [2Fe-2S]-[ferredoxin] + 2 S-adenosyl-L-methionine = 2-methyladenosine(2503) in 23S rRNA + 5'-deoxyadenosine + L-methionine + 2 oxidized [2Fe-2S]-[ferredoxin] + S-adenosyl-L-homocysteine. The enzyme catalyses adenosine(37) in tRNA + 2 reduced [2Fe-2S]-[ferredoxin] + 2 S-adenosyl-L-methionine = 2-methyladenosine(37) in tRNA + 5'-deoxyadenosine + L-methionine + 2 oxidized [2Fe-2S]-[ferredoxin] + S-adenosyl-L-homocysteine. Specifically methylates position 2 of adenine 2503 in 23S rRNA and position 2 of adenine 37 in tRNAs. m2A2503 modification seems to play a crucial role in the proofreading step occurring at the peptidyl transferase center and thus would serve to optimize ribosomal fidelity. The polypeptide is Dual-specificity RNA methyltransferase RlmN (Photobacterium profundum (strain SS9)).